Consider the following 249-residue polypeptide: Orotidine 5'-phosphate decarboxylase (249 aa).

Substrate-binding positions include Asp-21, Lys-43, 72-81 (DLKLYDIPET), Thr-128, Arg-193, Gln-204, Gly-224, and Arg-225. Residue Lys-74 is the Proton donor of the active site.

This sequence belongs to the OMP decarboxylase family. Type 1 subfamily. Homodimer.

It carries out the reaction orotidine 5'-phosphate + H(+) = UMP + CO2. It participates in pyrimidine metabolism; UMP biosynthesis via de novo pathway; UMP from orotate: step 2/2. Functionally, catalyzes the decarboxylation of orotidine 5'-monophosphate (OMP) to uridine 5'-monophosphate (UMP). This is Orotidine 5'-phosphate decarboxylase from Desulfosudis oleivorans (strain DSM 6200 / JCM 39069 / Hxd3) (Desulfococcus oleovorans).